Consider the following 63-residue polypeptide: Cytochrome b-c1 complex subunit 9 (63 aa).

Residues 2 to 21 (AAATLTSKLYSLLFRRTSTF) are Mitochondrial matrix-facing. A helical membrane pass occupies residues 22–47 (ALTIIVGVMFFERAFDQGADAIYDHI). Topologically, residues 48-63 (NEGKLWKHIKHKYENK) are mitochondrial intermembrane.

The protein belongs to the UQCR10/QCR9 family. Component of the ubiquinol-cytochrome c oxidoreductase (cytochrome b-c1 complex, complex III, CIII), a multisubunit enzyme composed of 11 subunits. The complex is composed of 3 respiratory subunits cytochrome b, cytochrome c1 and Rieske protein UQCRFS1, 2 core protein subunits UQCRC1/QCR1 and UQCRC2/QCR2, and 6 low-molecular weight protein subunits UQCRH/QCR6, UQCRB/QCR7, UQCRQ/QCR8, UQCR10/QCR9, UQCR11/QCR10 and subunit 9, the cleavage product of Rieske protein UQCRFS1. The complex exists as an obligatory dimer and forms supercomplexes (SCs) in the inner mitochondrial membrane with NADH-ubiquinone oxidoreductase (complex I, CI) and cytochrome c oxidase (complex IV, CIV), resulting in different assemblies (supercomplex SCI(1)III(2)IV(1) and megacomplex MCI(2)III(2)IV(2)). Interacts with STMP1.

It is found in the mitochondrion inner membrane. Functionally, component of the ubiquinol-cytochrome c oxidoreductase, a multisubunit transmembrane complex that is part of the mitochondrial electron transport chain which drives oxidative phosphorylation. The respiratory chain contains 3 multisubunit complexes succinate dehydrogenase (complex II, CII), ubiquinol-cytochrome c oxidoreductase (cytochrome b-c1 complex, complex III, CIII) and cytochrome c oxidase (complex IV, CIV), that cooperate to transfer electrons derived from NADH and succinate to molecular oxygen, creating an electrochemical gradient over the inner membrane that drives transmembrane transport and the ATP synthase. The cytochrome b-c1 complex catalyzes electron transfer from ubiquinol to cytochrome c, linking this redox reaction to translocation of protons across the mitochondrial inner membrane, with protons being carried across the membrane as hydrogens on the quinol. In the process called Q cycle, 2 protons are consumed from the matrix, 4 protons are released into the intermembrane space and 2 electrons are passed to cytochrome c. The polypeptide is Cytochrome b-c1 complex subunit 9 (UQCR10) (Homo sapiens (Human)).